The chain runs to 389 residues: Chalcone synthase 8 (389 aa).

Residue C164 is part of the active site.

The protein belongs to the thiolase-like superfamily. Chalcone/stilbene synthases family.

The catalysed reaction is (E)-4-coumaroyl-CoA + 3 malonyl-CoA + 3 H(+) = 2',4,4',6'-tetrahydroxychalcone + 3 CO2 + 4 CoA. It participates in secondary metabolite biosynthesis; flavonoid biosynthesis. In terms of biological role, the primary product of this enzyme is 4,2',4',6'-tetrahydroxychalcone (also termed naringenin-chalcone or chalcone) which can under specific conditions spontaneously isomerize into naringenin. The chain is Chalcone synthase 8 (CHS8) from Medicago sativa (Alfalfa).